Here is a 287-residue protein sequence, read N- to C-terminus: ATP synthase gamma chain (287 aa).

This sequence belongs to the ATPase gamma chain family. F-type ATPases have 2 components, CF(1) - the catalytic core - and CF(0) - the membrane proton channel. CF(1) has five subunits: alpha(3), beta(3), gamma(1), delta(1), epsilon(1). CF(0) has three main subunits: a, b and c.

The protein localises to the cell inner membrane. Functionally, produces ATP from ADP in the presence of a proton gradient across the membrane. The gamma chain is believed to be important in regulating ATPase activity and the flow of protons through the CF(0) complex. This chain is ATP synthase gamma chain, found in Xylella fastidiosa (strain M23).